The chain runs to 88 residues: Gas vesicle protein A2 (88 aa).

This sequence belongs to the gas vesicle GvpA family. The gas vesicle shell is 2 nm thick and consists of a single layer of this protein. It forms helical ribs nearly perpendicular to the long axis of the vesicle.

The protein localises to the gas vesicle shell. In terms of biological role, gas vesicles are hollow, gas filled proteinaceous nanostructures found in some microorganisms. During planktonic growth they allow positioning of the organism at a favorable depth for light or nutrient acquisition. GvpA forms the protein shell. Its function is as follows. It is not clear if the 2 type A proteins in this organism are functionally redundant. Functionally, when a minimal gvp locus (gvpA2-gvpR-gvpN-gvpF-gvpG-gvpL-gvpS-gvpK-gvpJ-gvpT-gvpU, called pNL29) is expressed in E.coli gas vesicles are made. The protein is Gas vesicle protein A2 of Priestia megaterium (Bacillus megaterium).